A 156-amino-acid polypeptide reads, in one-letter code: Probable cyclic pyranopterin monophosphate synthase (156 aa).

Met109 to Asp110 lines the substrate pocket. Asp124 is an active-site residue.

It belongs to the MoaC family. Homohexamer; trimer of dimers.

The enzyme catalyses (8S)-3',8-cyclo-7,8-dihydroguanosine 5'-triphosphate = cyclic pyranopterin phosphate + diphosphate. Its pathway is cofactor biosynthesis; molybdopterin biosynthesis. Its function is as follows. Catalyzes the conversion of (8S)-3',8-cyclo-7,8-dihydroguanosine 5'-triphosphate to cyclic pyranopterin monophosphate (cPMP). In Methanopyrus kandleri (strain AV19 / DSM 6324 / JCM 9639 / NBRC 100938), this protein is Probable cyclic pyranopterin monophosphate synthase.